Here is a 552-residue protein sequence, read N- to C-terminus: Ribosomal lysine N-methyltransferase 3 (552 aa).

An SET domain is found at 26–335; the sequence is SKCDIRESPL…QGQEIFNSYG (310 aa). S-adenosyl-L-methionine is bound at residue tyrosine 334. The disordered stretch occupies residues 399–432; it reads EDEEDEDGQAKSDNLSDDIESEEEEEEEEGDDSL. The segment covering 413-432 has biased composition (acidic residues); the sequence is LSDDIESEEEEEEEEGDDSL.

It belongs to the class V-like SAM-binding methyltransferase superfamily.

It is found in the nucleus. Functionally, S-adenosyl-L-methionine-dependent protein-lysine N-methyltransferase that monomethylates 60S ribosomal protein L42 (RPL42A and RPL42B) at 'Lys-40'. This chain is Ribosomal lysine N-methyltransferase 3, found in Saccharomyces cerevisiae (strain ATCC 204508 / S288c) (Baker's yeast).